A 268-amino-acid chain; its full sequence is Tryptophan synthase alpha chain (268 aa).

Residues E49 and D60 each act as proton acceptor in the active site.

The protein belongs to the TrpA family. As to quaternary structure, tetramer of two alpha and two beta chains.

The catalysed reaction is (1S,2R)-1-C-(indol-3-yl)glycerol 3-phosphate + L-serine = D-glyceraldehyde 3-phosphate + L-tryptophan + H2O. Its pathway is amino-acid biosynthesis; L-tryptophan biosynthesis; L-tryptophan from chorismate: step 5/5. Functionally, the alpha subunit is responsible for the aldol cleavage of indoleglycerol phosphate to indole and glyceraldehyde 3-phosphate. This Xanthomonas oryzae pv. oryzae (strain PXO99A) protein is Tryptophan synthase alpha chain.